A 1023-amino-acid polypeptide reads, in one-letter code: Sodium/potassium-transporting ATPase subunit alpha-1 (1023 aa).

Residues M1–V5 constitute a propeptide that is removed on maturation. The span at M1–E11 shows a compositional bias: basic and acidic residues. Positions M1 to V39 are disordered. Residues G6 to P87 lie on the Cytoplasmic side of the membrane. K9 carries the post-translational modification N6-acetyllysine. Position 10 is a phosphotyrosine (Y10). Position 16 is a phosphoserine (S16). K21 is modified (N6-acetyllysine). Over residues K28–V39 the composition is skewed to basic and acidic residues. Phosphoserine is present on residues S40 and S47. Positions P82–P84 are phosphoinositide-3 kinase binding. A helical transmembrane segment spans residues E88–A108. Over I109 to Y131 the chain is Extracellular. Residues L132–A152 traverse the membrane as a helical segment. Residues K153–I288 are Cytoplasmic-facing. The segment at S216 to N235 is disordered. Residue S228 is modified to Phosphoserine. At Y260 the chain carries Phosphotyrosine. The chain crosses the membrane as a helical span at residues E289 to I308. Over L309–A320 the chain is Extracellular. A helical transmembrane segment spans residues V321 to A338. Residues T339 to L772 are Cytoplasmic-facing. The 4-aspartylphosphate intermediate role is filled by D376. 2 positions are modified to phosphoserine: S452 and S484. K487 is a binding site for ATP. The residue at position 542 (Y542) is a Phosphotyrosine. The interval R596–D717 is mediates interaction with SCN7A. K661 bears the N6-succinyllysine mark. A phosphoserine mark is found at S668 and S675. Mg(2+)-binding residues include D717 and D721. Residues K773 to I792 traverse the membrane as a helical segment. Residues F793–L802 are Extracellular-facing. The chain crosses the membrane as a helical span at residues G803 to A823. Residues Y824–K843 lie on the Cytoplasmic side of the membrane. A helical transmembrane segment spans residues L844–F866. The Extracellular portion of the chain corresponds to F867–C918. The helical transmembrane segment at H919–K938 threads the bilayer. The Cytoplasmic segment spans residues T939 to N951. The residue at position 943 (S943) is a Phosphoserine; by PKA. A helical membrane pass occupies residues K952–Y970. At C971–P985 the chain is on the extracellular side. Residues T986–K1006 form a helical membrane-spanning segment. Over L1007–Y1023 the chain is Cytoplasmic.

Belongs to the cation transport ATPase (P-type) (TC 3.A.3) family. Type IIC subfamily. The sodium/potassium-transporting ATPase is composed of a catalytic alpha subunit, an auxiliary non-catalytic beta subunit and an additional regulatory subunit. Interacts with regulatory subunit FXYD1. Interacts with regulatory subunit FXYD3. Interacts with SIK1. Binds the HLA class II histocompatibility antigen DR1. Interacts with SLC35G1 and STIM1. Interacts with CLN3; this interaction regulates the sodium/potassium-transporting ATPase complex localization at the plasma membrane. Interacts with SCN7A; activates ATP1A1 P-type sodium:potassium-exchanging transporter activity which indirectly signals to nearby neurons to regulate sodium homeostasis. Phosphorylation on Tyr-10 modulates pumping activity. Phosphorylation of Ser-943 by PKA modulates the response of ATP1A1 to PKC. Dephosphorylation by protein phosphatase 2A (PP2A) following increases in intracellular sodium, leading to increase catalytic activity.

It localises to the cell membrane. It is found in the basolateral cell membrane. The protein resides in the sarcolemma. The protein localises to the cell projection. Its subcellular location is the axon. It localises to the melanosome. It catalyses the reaction K(+)(out) + Na(+)(in) + ATP + H2O = K(+)(in) + Na(+)(out) + ADP + phosphate + H(+). Its function is as follows. This is the catalytic component of the active enzyme, which catalyzes the hydrolysis of ATP coupled with the exchange of sodium and potassium ions across the plasma membrane. This action creates the electrochemical gradient of sodium and potassium ions, providing the energy for active transport of various nutrients. Could also be part of an osmosensory signaling pathway that senses body-fluid sodium levels and controls salt intake behavior as well as voluntary water intake to regulate sodium homeostasis. This chain is Sodium/potassium-transporting ATPase subunit alpha-1 (ATP1A1), found in Homo sapiens (Human).